The sequence spans 168 residues: Ribosome maturation factor RimM (168 aa).

Residues 95–168 form the PRC barrel domain; sequence KEGDYYWTDL…IIVVEWDADF (74 aa).

It belongs to the RimM family. In terms of assembly, binds ribosomal protein uS19.

The protein resides in the cytoplasm. Its function is as follows. An accessory protein needed during the final step in the assembly of 30S ribosomal subunit, possibly for assembly of the head region. Essential for efficient processing of 16S rRNA. May be needed both before and after RbfA during the maturation of 16S rRNA. It has affinity for free ribosomal 30S subunits but not for 70S ribosomes. The protein is Ribosome maturation factor RimM of Coxiella burnetii (strain CbuK_Q154) (Coxiella burnetii (strain Q154)).